A 569-amino-acid chain; its full sequence is Protein AF-9 (569 aa).

The YEATS domain occupies 1–138; it reads MASSCAVQVK…EDFRRKLLKA (138 aa). A disordered region spans residues 138 to 476; the sequence is AGGDPNRSIH…PPPPLLKTNN (339 aa). Low complexity predominate over residues 149-190; that stretch reads SSSSSSSSSSSSSSSSSSSSSSSSSSSSSSSSSSSSSSSSSS. Positions 202–265 are enriched in basic and acidic residues; that stretch reads EHKEKPSKDS…PKPMSKEPKA (64 aa). Ser-289 and Ser-295 each carry phosphoserine. The short motif at 296–301 is the Nuclear localization signal element; that stretch reads AKKRKK. Over residues 304–314 the composition is skewed to low complexity; the sequence is SEALFKSFSSA. Residues 323–350 are compositionally biased toward basic and acidic residues; that stretch reads ADKKQIKDKSHVKMGKVKIESETSEKKK. Residue Lys-340 forms a Glycyl lysine isopeptide (Lys-Gly) (interchain with G-Cter in SUMO2) linkage. Over residues 358 to 369 the composition is skewed to acidic residues; it reads DIVDPNDSDVEE. A compositionally biased stretch (low complexity) spans 372-396; it reads SSKSDSEQPSPASSSSSSSSSFTPS. A phosphoserine mark is found at Ser-413 and Ser-420. Acidic residues predominate over residues 415 to 430; that stretch reads DNEEESDEAEDNDNDS. Over residues 446-462 the composition is skewed to low complexity; it reads VSLSDGSDSESSSASSP. Residue Ser-484 is modified to Phosphoserine.

Component of the super elongation complex (SEC), at least composed of EAF1, EAF2, CDK9, MLLT3/AF9, AFF (AFF1 or AFF4), the P-TEFb complex and ELL (ELL, ELL2 or ELL3). Interacts with BCOR. Interacts with CBX8. Interacts with ALKBH4. Ubiquitously expressed. Strong expression in the spleen.

The protein resides in the nucleus. The protein localises to the chromosome. In terms of biological role, chromatin reader component of the super elongation complex (SEC), a complex required to increase the catalytic rate of RNA polymerase II transcription by suppressing transient pausing by the polymerase at multiple sites along the DNA. Specifically recognizes and binds acylated histone H3, with a preference for histone H3 that is crotonylated. Crotonylation marks active promoters and enhancers and confers resistance to transcriptional repressors. Recognizes and binds histone H3 crotonylated at 'Lys-9' (H3K9cr), and with slightly lower affinity histone H3 crotonylated at 'Lys-18' (H3K18cr). Also recognizes and binds histone H3 acetylated and butyrylated at 'Lys-9' (H3K9ac and H3K9bu, respectively), but with lower affinity than crotonylated histone H3. In the SEC complex, MLLT3 is required to recruit the complex to crotonylated histones. Recruitment of the SEC complex to crotonylated histones promotes recruitment of DOT1L on active chromatin to deposit histone H3 'Lys-79' methylation (H3K79me). Plays a key role in hematopoietic stem cell (HSC) maintenance by preserving, rather than conferring, HSC stemness. Acts by binding to the transcription start site of active genes in HSCs and sustaining level of H3K79me2, probably by recruiting DOT1L. The chain is Protein AF-9 (Mllt3) from Mus musculus (Mouse).